Consider the following 295-residue polypeptide: Malonyl-[acyl-carrier protein] O-methyltransferase (295 aa).

The protein belongs to the methyltransferase superfamily.

The enzyme catalyses malonyl-[ACP] + S-adenosyl-L-methionine = malonyl-[ACP] methyl ester + S-adenosyl-L-homocysteine. Its pathway is cofactor biosynthesis; biotin biosynthesis. Its function is as follows. Converts the free carboxyl group of a malonyl-thioester to its methyl ester by transfer of a methyl group from S-adenosyl-L-methionine (SAM). It allows to synthesize pimeloyl-ACP via the fatty acid synthetic pathway. This chain is Malonyl-[acyl-carrier protein] O-methyltransferase, found in Xylella fastidiosa (strain M23).